The following is a 301-amino-acid chain: Epimerase family protein Mb2239 (301 aa).

It belongs to the NAD(P)-dependent epimerase/dehydratase family. SDR39U1 subfamily.

The polypeptide is Epimerase family protein Mb2239 (Mycobacterium bovis (strain ATCC BAA-935 / AF2122/97)).